We begin with the raw amino-acid sequence, 279 residues long: uncharacterized protein (279 aa).

The signal sequence occupies residues 1–21; the sequence is MKIIRTLFLLLIAVYGSSVVA.

The protein to E.coli YfcO.

This is an uncharacterized protein from Salmonella typhimurium (strain LT2 / SGSC1412 / ATCC 700720).